The primary structure comprises 356 residues: Protein-glutamate methylesterase/protein-glutamine glutaminase 4 (356 aa).

A Response regulatory domain is found at 15-132 (RVLVVDDSAV…SVGEMTADLV (118 aa)). The residue at position 66 (Asp-66) is a 4-aspartylphosphate. A CheB-type methylesterase domain is found at 162–348 (ARTTLQVVAI…PLDRIAPEIL (187 aa)). Active-site residues include Ser-174, His-200, and Asp-296.

It belongs to the CheB family. In terms of processing, phosphorylated by CheA. Phosphorylation of the N-terminal regulatory domain activates the methylesterase activity.

It localises to the cytoplasm. It carries out the reaction [protein]-L-glutamate 5-O-methyl ester + H2O = L-glutamyl-[protein] + methanol + H(+). It catalyses the reaction L-glutaminyl-[protein] + H2O = L-glutamyl-[protein] + NH4(+). Functionally, involved in chemotaxis. Part of a chemotaxis signal transduction system that modulates chemotaxis in response to various stimuli. Catalyzes the demethylation of specific methylglutamate residues introduced into the chemoreceptors (methyl-accepting chemotaxis proteins or MCP) by CheR. Also mediates the irreversible deamidation of specific glutamine residues to glutamic acid. The polypeptide is Protein-glutamate methylesterase/protein-glutamine glutaminase 4 (Anaeromyxobacter dehalogenans (strain 2CP-C)).